The chain runs to 523 residues: Uridylate cyclase (523 aa).

Guanylate cyclase domains lie at 69-209 and 318-438; these read VHVY…AKLA and MSIF…IGIR. The a ribonucleoside 5'-triphosphate site is built by Tyr-72 and Arg-125. Asp-323, Ile-324, and Asp-372 together coordinate Mn(2+).

This sequence belongs to the adenylyl cyclase class-4/guanylyl cyclase family. Pyrimidine cyclase subfamily. Monomer. Mn(2+) serves as cofactor.

The protein resides in the cytoplasm. The enzyme catalyses UTP = 3',5'-cyclic UMP + diphosphate. Functionally, pycsar (pyrimidine cyclase system for antiphage resistance) provides immunity against bacteriophage. The pyrimidine cyclase (PycC) synthesizes cyclic nucleotides in response to infection; these serve as specific second messenger signals. The signals activate the nearby effector, leading to bacterial cell death and abortive phage infection. A clade A Pycsar system. Its function is as follows. The pyrimidine cyclase gene of a two-gene Pycsar system, generates cyclic UMP (cUMP) from UTP, has little to no activity on ATP, CTP or GTP. Expression of this and effector RsPycTM (AC A0A4R2UGS4) probably confers resistance to some bacteriophage. The genes are probably only expressed in response to bacteriophage infection. This chain is Uridylate cyclase, found in Rhizobium sp. (strain PP-F2F-G36).